The chain runs to 145 residues: YIDEETMHLHHDKHHQTYVNNVNAALEKHPEIGEDLESLLADVESIPADIRQAVINNGGGHLNHALFWELMTPEQTAPSAELAAAIDATFGSFEDFKAAFTAAATTRFGSGWAWSVVNKEGKLEVTSTANQDTPLSEGKTPILGL.

Residues H10 and H64 each contribute to the Fe(3+) site. Mn(2+) is bound by residues H10 and H64.

This sequence belongs to the iron/manganese superoxide dismutase family. Requires Mn(2+) as cofactor. It depends on Fe(3+) as a cofactor.

It catalyses the reaction 2 superoxide + 2 H(+) = H2O2 + O2. In terms of biological role, destroys superoxide anion radicals which are normally produced within the cells and which are toxic to biological systems. Catalyzes the dismutation of superoxide anion radicals into O2 and H2O2 by successive reduction and oxidation of the transition metal ion at the active site. This Streptococcus parasanguinis protein is Superoxide dismutase [Mn/Fe] (sodA).